A 212-amino-acid polypeptide reads, in one-letter code: Ribosomal RNA small subunit methyltransferase G (212 aa).

S-adenosyl-L-methionine is bound by residues glycine 80, leucine 85, 131–132, and arginine 146; that span reads VE.

This sequence belongs to the methyltransferase superfamily. RNA methyltransferase RsmG family.

Its subcellular location is the cytoplasm. It carries out the reaction guanosine(527) in 16S rRNA + S-adenosyl-L-methionine = N(7)-methylguanosine(527) in 16S rRNA + S-adenosyl-L-homocysteine. Functionally, specifically methylates the N7 position of guanine in position 527 of 16S rRNA. This is Ribosomal RNA small subunit methyltransferase G from Azoarcus sp. (strain BH72).